The chain runs to 80 residues: Translation initiation factor IF-1 (80 aa).

Residues 6–80 (EKRKKEESDV…TSRGRIVYRK (75 aa)) form the S1-like domain.

This sequence belongs to the IF-1 family. Component of the 30S ribosomal translation pre-initiation complex which assembles on the 30S ribosome in the order IF-2 and IF-3, IF-1 and N-formylmethionyl-tRNA(fMet); mRNA recruitment can occur at any time during PIC assembly.

The protein localises to the cytoplasm. Its function is as follows. One of the essential components for the initiation of protein synthesis. Stabilizes the binding of IF-2 and IF-3 on the 30S subunit to which N-formylmethionyl-tRNA(fMet) subsequently binds. Helps modulate mRNA selection, yielding the 30S pre-initiation complex (PIC). Upon addition of the 50S ribosomal subunit IF-1, IF-2 and IF-3 are released leaving the mature 70S translation initiation complex. This Deinococcus geothermalis (strain DSM 11300 / CIP 105573 / AG-3a) protein is Translation initiation factor IF-1.